We begin with the raw amino-acid sequence, 503 residues long: ATP synthase subunit alpha (503 aa).

Residue 169–176 (GDRKTGKT) coordinates ATP.

Belongs to the ATPase alpha/beta chains family. As to quaternary structure, F-type ATPases have 2 components, CF(1) - the catalytic core - and CF(0) - the membrane proton channel. CF(1) has five subunits: alpha(3), beta(3), gamma(1), delta(1), epsilon(1). CF(0) has three main subunits: a(1), b(2) and c(9-12). The alpha and beta chains form an alternating ring which encloses part of the gamma chain. CF(1) is attached to CF(0) by a central stalk formed by the gamma and epsilon chains, while a peripheral stalk is formed by the delta and b chains.

It localises to the cell membrane. It carries out the reaction ATP + H2O + 4 H(+)(in) = ADP + phosphate + 5 H(+)(out). In terms of biological role, produces ATP from ADP in the presence of a proton gradient across the membrane. The alpha chain is a regulatory subunit. The polypeptide is ATP synthase subunit alpha (Ligilactobacillus salivarius (strain UCC118) (Lactobacillus salivarius)).